An 83-amino-acid polypeptide reads, in one-letter code: Putative defensin-like protein 111 (83 aa).

The first 24 residues, 1–24 (MAITKKILLPFVLTILFVISSVHC), serve as a signal peptide directing secretion. 4 disulfides stabilise this stretch: C40/C80, C46/C69, C54/C78, and C58/C79.

The protein belongs to the DEFL family.

It localises to the secreted. This chain is Putative defensin-like protein 111 (LCR50), found in Arabidopsis thaliana (Mouse-ear cress).